The sequence spans 343 residues: N-acetylornithine carbamoyltransferase (343 aa).

Carbamoyl phosphate is bound by residues 49-52, tryptophan 77, and arginine 112; that span reads SMRT. Glutamate 144 contacts N(2)-acetyl-L-ornithine. 148-151 provides a ligand contact to carbamoyl phosphate; sequence HPCQ. The N(2)-acetyl-L-ornithine site is built by lysine 252 and leucine 295. 294-295 is a binding site for carbamoyl phosphate; it reads CL. Lysine 302 is modified (N6-carboxylysine). Residue arginine 322 participates in carbamoyl phosphate binding.

This sequence belongs to the aspartate/ornithine carbamoyltransferase superfamily. AOTCase family. Homotrimer.

It is found in the cytoplasm. The catalysed reaction is N(2)-acetyl-L-ornithine + carbamoyl phosphate = N(2)-acetyl-L-citrulline + phosphate + H(+). The protein operates within amino-acid biosynthesis; L-arginine biosynthesis. With respect to regulation, carboxylation at Lys-302 increases the catalytic activity of the enzyme. In terms of biological role, catalyzes the transfer of the carbamoyl group from carbamoyl phosphate to the delta-amino group of N(2)-acetyl-L-ornithine to produce N(2)-acetyl-L-citrulline. This is a step in an alternative arginine biosynthesis pathway. The enzyme has no activity with ornithine. The chain is N-acetylornithine carbamoyltransferase from Xanthomonas axonopodis pv. citri (strain 306).